The primary structure comprises 413 residues: Serine hydroxymethyltransferase (413 aa).

(6S)-5,6,7,8-tetrahydrofolate is bound by residues L119 and 123 to 125 (GHL). Position 228 is an N6-(pyridoxal phosphate)lysine (K228). Position 351–353 (351–353 (SPF)) interacts with (6S)-5,6,7,8-tetrahydrofolate.

It belongs to the SHMT family. Homodimer. Pyridoxal 5'-phosphate is required as a cofactor.

The protein resides in the cytoplasm. The catalysed reaction is (6R)-5,10-methylene-5,6,7,8-tetrahydrofolate + glycine + H2O = (6S)-5,6,7,8-tetrahydrofolate + L-serine. The protein operates within one-carbon metabolism; tetrahydrofolate interconversion. It functions in the pathway amino-acid biosynthesis; glycine biosynthesis; glycine from L-serine: step 1/1. Catalyzes the reversible interconversion of serine and glycine with tetrahydrofolate (THF) serving as the one-carbon carrier. This reaction serves as the major source of one-carbon groups required for the biosynthesis of purines, thymidylate, methionine, and other important biomolecules. Also exhibits THF-independent aldolase activity toward beta-hydroxyamino acids, producing glycine and aldehydes, via a retro-aldol mechanism. In Anoxybacillus flavithermus (strain DSM 21510 / WK1), this protein is Serine hydroxymethyltransferase.